The chain runs to 330 residues: Erlin-2-B (330 aa).

Topologically, residues 1–2 (MS) are cytoplasmic. Residues 3-23 (HAGAIAALGVALIAAALFSAI) traverse the membrane as a helical segment. Topologically, residues 24–330 (HKIEEGHVGV…NEPAAAEELK (307 aa)) are lumenal. Asn-106 carries an N-linked (GlcNAc...) asparagine glycan. The disordered stretch occupies residues 308–330 (SSSAGPRVQSAKRNEPAAAEELK). The span at 319–330 (KRNEPAAAEELK) shows a compositional bias: basic and acidic residues.

This sequence belongs to the band 7/mec-2 family.

Its subcellular location is the endoplasmic reticulum membrane. Its function is as follows. Mediates the endoplasmic reticulum-associated degradation (ERAD) of inositol 1,4,5-trisphosphate receptors (IP3Rs). Promotes sterol-accelerated ERAD of HMGCR. Involved in regulation of cellular cholesterol homeostasis by regulation the SREBP signaling pathway. This Xenopus laevis (African clawed frog) protein is Erlin-2-B (erlin2-b).